A 708-amino-acid polypeptide reads, in one-letter code: Ion-translocating oxidoreductase complex subunit C (708 aa).

4Fe-4S ferredoxin-type domains follow at residues Gly369–Tyr397 and Lys407–Phe436. Positions 377, 380, 383, 387, 416, 419, 422, and 426 each coordinate [4Fe-4S] cluster. The tract at residues Ala630–Pro682 is disordered.

The protein belongs to the 4Fe4S bacterial-type ferredoxin family. RnfC subfamily. In terms of assembly, the complex is composed of six subunits: RsxA, RsxB, RsxC, RsxD, RsxE and RsxG. [4Fe-4S] cluster is required as a cofactor.

Its subcellular location is the cell inner membrane. In terms of biological role, part of a membrane-bound complex that couples electron transfer with translocation of ions across the membrane. Required to maintain the reduced state of SoxR. This chain is Ion-translocating oxidoreductase complex subunit C, found in Escherichia coli O1:K1 / APEC.